The primary structure comprises 354 residues: Uroporphyrinogen decarboxylase (354 aa).

Substrate is bound by residues 27-31 (RQAGR), D77, Y154, S209, and H327.

Belongs to the uroporphyrinogen decarboxylase family. In terms of assembly, homodimer.

Its subcellular location is the cytoplasm. It catalyses the reaction uroporphyrinogen III + 4 H(+) = coproporphyrinogen III + 4 CO2. The protein operates within porphyrin-containing compound metabolism; protoporphyrin-IX biosynthesis; coproporphyrinogen-III from 5-aminolevulinate: step 4/4. Catalyzes the decarboxylation of four acetate groups of uroporphyrinogen-III to yield coproporphyrinogen-III. In Shewanella amazonensis (strain ATCC BAA-1098 / SB2B), this protein is Uroporphyrinogen decarboxylase.